Reading from the N-terminus, the 427-residue chain is MLETVEKDKDVNAMMLEIGRRAKAAARPLATASAERKHAALVAMAGVIVTRTAEILAANALDLENARESGVASAFIDRLTLTESRIRDMADGIRAIAELIDPVGEVISEWDRPNGLHIERVRTPLGVIGVIYESRPNVTADAGALCLKAGNAVILRGGSDSFHSSRAIHACLTEGLKVAGLPEDAIQMVPVADRAAVGAMLTGLNGAIDVIVPRGGKSLVARVQNEARVPVFAHLEGLCHIYVDASADRDMAKKIVVNAKMRRTGICGAAETLLIDRNAAEKFAKPLLEALVDAGCEVRASDDLASVMPGLKAATDEDWATEYLDAIISARLVDGISGAIEHINTWSSAHTEAVIAEDPAVVERFFSEIDSAILLHNASTQFADGGEFGMGGEIGIATGKMHARGPVGVEQLTSFKYRVRGTGQVRP.

It belongs to the gamma-glutamyl phosphate reductase family.

The protein resides in the cytoplasm. The enzyme catalyses L-glutamate 5-semialdehyde + phosphate + NADP(+) = L-glutamyl 5-phosphate + NADPH + H(+). It functions in the pathway amino-acid biosynthesis; L-proline biosynthesis; L-glutamate 5-semialdehyde from L-glutamate: step 2/2. Its function is as follows. Catalyzes the NADPH-dependent reduction of L-glutamate 5-phosphate into L-glutamate 5-semialdehyde and phosphate. The product spontaneously undergoes cyclization to form 1-pyrroline-5-carboxylate. The polypeptide is Gamma-glutamyl phosphate reductase (Rhizobium meliloti (strain 1021) (Ensifer meliloti)).